The primary structure comprises 465 residues: 6-phospho-beta-glucosidase GmuD (465 aa).

Glutamate 170 (proton donor) is an active-site residue. Glutamate 368 serves as the catalytic Nucleophile.

This sequence belongs to the glycosyl hydrolase 1 family.

The catalysed reaction is 6-phospho-beta-D-glucosyl-(1-&gt;4)-D-glucose + H2O = D-glucose 6-phosphate + D-glucose. Phospho-beta-D-glucosidase that seems to be involved in the degradation of glucomannan. Is also capable of hydrolyzing aryl-phospho-beta-D-glucosides, although very weakly, and plays only a minor role, if any, in the degradation of these substrates in vivo. The polypeptide is 6-phospho-beta-glucosidase GmuD (gmuD) (Bacillus subtilis (strain 168)).